The sequence spans 141 residues: Large ribosomal subunit protein uL11 (141 aa).

The protein belongs to the universal ribosomal protein uL11 family. Part of the ribosomal stalk of the 50S ribosomal subunit. Interacts with L10 and the large rRNA to form the base of the stalk. L10 forms an elongated spine to which L12 dimers bind in a sequential fashion forming a multimeric L10(L12)X complex. One or more lysine residues are methylated.

Forms part of the ribosomal stalk which helps the ribosome interact with GTP-bound translation factors. This is Large ribosomal subunit protein uL11 from Chlorobium phaeobacteroides (strain BS1).